The following is a 186-amino-acid chain: Alpha/beta-gliadin clone PTO-A10 (186 aa).

A disordered region spans residues 1–20 (PQPQPQYSQPQQPISQQQQQ).

The protein belongs to the gliadin/glutenin family. Substrate of transglutaminase.

Functionally, gliadin is the major seed storage protein in wheat. The chain is Alpha/beta-gliadin clone PTO-A10 from Triticum aestivum (Wheat).